Here is a 480-residue protein sequence, read N- to C-terminus: Cobyric acid synthase (480 aa).

Positions 249–436 constitute a GATase cobBQ-type domain; it reads KLKVVVPVLT…LHGFLDSEAA (188 aa). Cysteine 330 serves as the catalytic Nucleophile. Histidine 428 is an active-site residue.

Belongs to the CobB/CobQ family. CobQ subfamily.

Its pathway is cofactor biosynthesis; adenosylcobalamin biosynthesis. In terms of biological role, catalyzes amidations at positions B, D, E, and G on adenosylcobyrinic A,C-diamide. NH(2) groups are provided by glutamine, and one molecule of ATP is hydrogenolyzed for each amidation. This Vibrio vulnificus (strain YJ016) protein is Cobyric acid synthase.